A 204-amino-acid polypeptide reads, in one-letter code: Superoxide dismutase [Mn] (204 aa).

His27 serves as a coordination point for Mn(2+). A phosphothreonine mark is found at Thr34 and Thr70. Residues His82, Asp164, and His168 each contribute to the Mn(2+) site.

It belongs to the iron/manganese superoxide dismutase family. As to quaternary structure, homodimer. The cofactor is Mn(2+).

The catalysed reaction is 2 superoxide + 2 H(+) = H2O2 + O2. In terms of biological role, destroys superoxide anion radicals which are normally produced within the cells and which are toxic to biological systems. The polypeptide is Superoxide dismutase [Mn] (sodA) (Geobacillus stearothermophilus (Bacillus stearothermophilus)).